The primary structure comprises 273 residues: Bis(5'-nucleosyl)-tetraphosphatase, symmetrical (273 aa).

This sequence belongs to the Ap4A hydrolase family.

It catalyses the reaction P(1),P(4)-bis(5'-adenosyl) tetraphosphate + H2O = 2 ADP + 2 H(+). Functionally, hydrolyzes diadenosine 5',5'''-P1,P4-tetraphosphate to yield ADP. In Aliivibrio salmonicida (strain LFI1238) (Vibrio salmonicida (strain LFI1238)), this protein is Bis(5'-nucleosyl)-tetraphosphatase, symmetrical.